Consider the following 452-residue polypeptide: mRNA export factor ICP27 homolog (452 aa).

The tract at residues 42–164 (EAIGSTPGED…RNDQTHDESY (123 aa)) is disordered. Residues 98–107 (SNHHGGRDVE) are compositionally biased toward basic and acidic residues. Residues 129–144 (SRKHRDRSLSNRRRRP) are compositionally biased toward basic residues. The segment covering 154–164 (ERNDQTHDESY) has biased composition (basic and acidic residues). Zn(2+) is bound by residues Cys335, His417, Cys421, and Cys426. The CHC2-type zinc finger occupies 335–426 (CLLLNRDNDL…HQRECGRVEC (92 aa)).

It belongs to the HHV-1 ICP27 protein family. As to quaternary structure, homodimer. Homodimerization is required for transactivation. Associates in a complex with RNA, and host export factors NXF1/TAP and ALYREF; these interactions allow nuclear export of viral transcripts. Interacts with three host shuttling SR proteins SRSF1, SRSF3 and SRSF7. Interacts with host SRPK1. Interacts with IE62; this interaction enhances IE62 transactivation. Phosphorylated in vitro by SRPK1.

The protein localises to the host cytoplasm. Its subcellular location is the host nucleus. Multifunctional regulator of the expression of viral genes that mediates nuclear export of viral intronless mRNAs. This immediate early (EI) protein promotes the nuclear export of viral intronless mRNAs by interacting with mRNAs and host NXF1/TAP. The chain is mRNA export factor ICP27 homolog from Varicella-zoster virus (strain Dumas) (HHV-3).